Reading from the N-terminus, the 876-residue chain is DNA gyrase subunit A (876 aa).

Positions 34–532 (LPDVRDGLKP…NSVDINIEDL (499 aa)) constitute a Topo IIA-type catalytic domain. Residue Tyr122 is the O-(5'-phospho-DNA)-tyrosine intermediate of the active site. Residues 559–565 (QRRGGKG) carry the GyrA-box motif. The disordered stretch occupies residues 844 to 876 (DEELDAIDGSAAEGDEDIAPEADTDDDIAEDEE). The segment covering 856–876 (EGDEDIAPEADTDDDIAEDEE) has biased composition (acidic residues).

It belongs to the type II topoisomerase GyrA/ParC subunit family. In terms of assembly, heterotetramer, composed of two GyrA and two GyrB chains. In the heterotetramer, GyrA contains the active site tyrosine that forms a transient covalent intermediate with DNA, while GyrB binds cofactors and catalyzes ATP hydrolysis.

It localises to the cytoplasm. It carries out the reaction ATP-dependent breakage, passage and rejoining of double-stranded DNA.. Functionally, a type II topoisomerase that negatively supercoils closed circular double-stranded (ds) DNA in an ATP-dependent manner to modulate DNA topology and maintain chromosomes in an underwound state. Negative supercoiling favors strand separation, and DNA replication, transcription, recombination and repair, all of which involve strand separation. Also able to catalyze the interconversion of other topological isomers of dsDNA rings, including catenanes and knotted rings. Type II topoisomerases break and join 2 DNA strands simultaneously in an ATP-dependent manner. This is DNA gyrase subunit A from Klebsiella oxytoca.